The primary structure comprises 214 residues: Calcineurin B homologous protein 3 (214 aa).

Glycine 2 carries N-myristoyl glycine lipidation. The region spanning phenylalanine 110 to glycine 145 is the EF-hand domain. Positions 123, 125, 127, and 134 each coordinate Ca(2+).

Belongs to the calcineurin regulatory subunit family. CHP subfamily. As to quaternary structure, monomer. Homodimer. As to expression, expressed in the bipotential gonad by E4.5 and expressed in both the testis and ovary by E5.5, but with expression higher in the testis. Expressed in the testis cords but also at low levels in the interstitium. In the ovary, expression is principally in the ovarian cortex, but also in the medulla. Also expressed in the embryonic brain, with expression highest in the region between the nasal placode and olfactory bulb. Also expressed in the embryonic heart and tail.

Its subcellular location is the nucleus. It localises to the cytoplasm. It is found in the membrane. The protein localises to the cell membrane. The protein resides in the cell projection. Its subcellular location is the lamellipodium. It localises to the ruffle membrane. In terms of biological role, functions as an integral cofactor in cell pH regulation by controlling plasma membrane-type Na(+)/H(+) exchange activity. Promotes the induction of hematopoietic stem cell differentiation toward megakaryocytic lineage. Essential for the coupling of ERK cascade activation with the expression of ETS family genes in megakaryocytic differentiation. Also involved in granulocytic differentiation in a ERK-dependent manner. Inhibits the phosphatase activity of calcineurin. This chain is Calcineurin B homologous protein 3, found in Gallus gallus (Chicken).